The chain runs to 487 residues: WAS/WASL-interacting protein family member 1 (487 aa).

The span at 1 to 14 (MPVPPPPAPPPPPT) shows a compositional bias: pro residues. A disordered region spans residues 1-487 (MPVPPPPAPP…GAPPLPPIPR (487 aa)). The span at 21 to 31 (EKPSLNKTEQA) shows a compositional bias: polar residues. The 18-residue stretch at 32 to 49 (GRNALLSDISKGKKLKKT) folds into the WH2 domain. Arg33 bears the Asymmetric dimethylarginine mark. The segment at 45-48 (KLKK) is binds actin. Over residues 64–100 (GAGGGYGGGSGGGGGGGSSGGGGNFGGGGPPGLGGLF) the composition is skewed to gly residues. Residues Arg121 and Arg130 each carry the omega-N-methylarginine modification. The segment covering 136 to 147 (PFSSPSGPGRFP) has biased composition (low complexity). Phosphoserine is present on Ser138. Pro residues-rich tracts occupy residues 157–170 (PPEP…PPRP) and 178–190 (SLPP…PRPI). The residue at position 222 (Ser222) is a Phosphoserine. 3 stretches are compositionally biased toward pro residues: residues 234–243 (FPRPPLPPTP), 269–285 (VPPP…PSTP), and 293–309 (APPP…PLPP). Position 324 is a phosphoserine (Ser324). Pro residues predominate over residues 328 to 355 (PTPPLPSPGRSGPLPPPPTERPPPPVRD). Thr329 bears the Phosphothreonine mark. Ser334 bears the Phosphoserine mark. XRSGPXPPXP motif repeat units follow at residues 336 to 345 (GRSGPLPPPP), 358 to 367 (GRSGPLPPPP), and 394 to 403 (PRSGPRPPLP). The span at 397-418 (GPRPPLPPDRPGAGAPPPPPPS) shows a compositional bias: pro residues. Over residues 419–428 (TSVRNGFQDS) the composition is skewed to polar residues. Over residues 464–478 (ARSESRSGSNRRERG) the composition is skewed to basic and acidic residues.

This sequence belongs to the verprolin family. As to quaternary structure, binds to WAS within the N-terminal region, at a site distinct from the CDC42-binding site. Binds profilin and actin. Interacts with DBNL. Binds to WASL. Interacts with DBNL. Interacts with FNBP1L (via the SH3 domain). Isoforms were differentially expressed. One isoform was ubiquitously expressed, another was muscle-specific and another was expressed in the liver, heart and testis.

It localises to the cytoplasmic vesicle. The protein localises to the cytoplasm. Its subcellular location is the cytoskeleton. It is found in the cell projection. The protein resides in the ruffle. Functionally, plays a role in the reorganization of the actin cytoskeleton. Contributes with NCK1 and GRB2 in the recruitment and activation of WASL. Plays a role in the formation of cell ruffles. May participate in regulating the subcellular localization of WASL, resulting in the disassembly of stress fibers in favor of filopodia formation. The sequence is that of WAS/WASL-interacting protein family member 1 (Wipf1) from Rattus norvegicus (Rat).